Reading from the N-terminus, the 629-residue chain is Dihydroxy-acid dehydratase 2 (629 aa).

Asp82 is a binding site for Mg(2+). Cys123 lines the [2Fe-2S] cluster pocket. Positions 124 and 125 each coordinate Mg(2+). The residue at position 125 (Lys125) is an N6-carboxylysine. Position 197 (Cys197) interacts with [2Fe-2S] cluster. Glu493 is a Mg(2+) binding site. Ser519 functions as the Proton acceptor in the catalytic mechanism. Residues 603–629 form a disordered region; sequence DKGGVRRLPPDELGGPEAAFDTQTRAG.

The protein belongs to the IlvD/Edd family. Homodimer. It depends on [2Fe-2S] cluster as a cofactor. The cofactor is Mg(2+).

It catalyses the reaction (2R)-2,3-dihydroxy-3-methylbutanoate = 3-methyl-2-oxobutanoate + H2O. The catalysed reaction is (2R,3R)-2,3-dihydroxy-3-methylpentanoate = (S)-3-methyl-2-oxopentanoate + H2O. The protein operates within amino-acid biosynthesis; L-isoleucine biosynthesis; L-isoleucine from 2-oxobutanoate: step 3/4. Its pathway is amino-acid biosynthesis; L-valine biosynthesis; L-valine from pyruvate: step 3/4. In terms of biological role, functions in the biosynthesis of branched-chain amino acids. Catalyzes the dehydration of (2R,3R)-2,3-dihydroxy-3-methylpentanoate (2,3-dihydroxy-3-methylvalerate) into 2-oxo-3-methylpentanoate (2-oxo-3-methylvalerate) and of (2R)-2,3-dihydroxy-3-methylbutanoate (2,3-dihydroxyisovalerate) into 2-oxo-3-methylbutanoate (2-oxoisovalerate), the penultimate precursor to L-isoleucine and L-valine, respectively. This Nocardia farcinica (strain IFM 10152) protein is Dihydroxy-acid dehydratase 2.